Consider the following 237-residue polypeptide: Uridylate kinase (237 aa).

12 to 15 (KLSG) is a binding site for ATP. Residues 20–25 (GEDGLG) form an involved in allosteric activation by GTP region. Gly54 contributes to the UMP binding site. Residues Gly55 and Arg59 each contribute to the ATP site. Residues Asp74 and 135-142 (TGNPFFTT) contribute to the UMP site. 3 residues coordinate ATP: Thr162, Tyr168, and Asp171.

Belongs to the UMP kinase family. As to quaternary structure, homohexamer.

It localises to the cytoplasm. It catalyses the reaction UMP + ATP = UDP + ADP. It participates in pyrimidine metabolism; CTP biosynthesis via de novo pathway; UDP from UMP (UMPK route): step 1/1. Its activity is regulated as follows. Allosterically activated by GTP. Inhibited by UTP. In terms of biological role, catalyzes the reversible phosphorylation of UMP to UDP. This is Uridylate kinase (pyrH) from Haemophilus influenzae (strain ATCC 51907 / DSM 11121 / KW20 / Rd).